Reading from the N-terminus, the 582-residue chain is Phosphoglucomutase, cytoplasmic (582 aa).

Residues Arg-25 and Ser-124 each contribute to the alpha-D-glucose 1,6-bisphosphate site. Residue Ser-124 is the Phosphoserine intermediate of the active site. 4 residues coordinate Mg(2+): Ser-124, Asp-299, Asp-301, and Asp-303. Ser-124 carries the post-translational modification Phosphoserine. Residues Asp-303, Arg-304, Thr-367, Glu-386, Ser-388, and Lys-399 each contribute to the alpha-D-glucose 1,6-bisphosphate site.

It belongs to the phosphohexose mutase family. Monomer. The cofactor is Mg(2+).

It localises to the cytoplasm. It carries out the reaction alpha-D-glucose 1-phosphate = alpha-D-glucose 6-phosphate. It catalyses the reaction O-phospho-L-seryl-[protein] + alpha-D-glucose 1-phosphate = alpha-D-glucose 1,6-bisphosphate + L-seryl-[protein]. The catalysed reaction is alpha-D-glucose 1,6-bisphosphate + L-seryl-[protein] = O-phospho-L-seryl-[protein] + alpha-D-glucose 6-phosphate. Its function is as follows. Catalyzes the reversible isomerization of alpha-D-glucose 1-phosphate to alpha-D-glucose 6-phosphate. The mechanism proceeds via the intermediate compound alpha-D-glucose 1,6-bisphosphate. This enzyme participates in both the breakdown and synthesis of glucose. The protein is Phosphoglucomutase, cytoplasmic (PGM1) of Populus tremula (European aspen).